The sequence spans 177 residues: MSSIPAGTDPGSCGANFKNDRKRRDKINDRIQELLSIIPKDFFRDYYGNSGSNDTLSESTPGALGLSSKAKGTGTKDGKPNKGQILTQAVEYISHLQNQVDTQNREEVELMVKATQLAKQTGTIVNDINLENTSAEVALSRIGVGPLAATNDDSVRPPAKRLSSFEYGGYGEYGNGS.

Positions 1–24 (MSSIPAGTDPGSCGANFKNDRKRR) are disordered. A bHLH domain is found at 11-96 (GSCGANFKND…TQAVEYISHL (86 aa)). Residues Ser-50 and Ser-52 each carry the phosphoserine modification. Disordered regions lie at residues 52 to 82 (SNDT…KPNK) and 147 to 177 (LAAT…GNGS). The residue at position 60 (Thr-60) is a Phosphothreonine. Gly residues predominate over residues 168-177 (GGYGEYGNGS).

As to quaternary structure, binds DNA as a heterodimer with RTG3.

It localises to the nucleus. Its function is as follows. Required for a novel path of interorganelle communication between mitochondria, peroxisomes and the nucleus, thereby maintaining a functional metabolic interaction between the tricarboxylic acid and glyoxylate cycles. Transcription factor that regulates CIT2 gene expression. Binds to two identical sites oriented as inverted repeats 28 bp apart in a regulatory upstream activation sequence element (UASR) in the CIT2 promoter. The core binding site is 5'-GGTCAC-3'. This Saccharomyces cerevisiae (strain ATCC 204508 / S288c) (Baker's yeast) protein is Retrograde regulation protein 1 (RTG1).